The primary structure comprises 1133 residues: Fas-binding factor 1 (1133 aa).

2 disordered regions span residues 89–198 (LGLK…TPIR) and 211–544 (IMAT…VPVQ). Residues 102-113 (AAKDPGKGELPN) show a composition bias toward basic and acidic residues. Over residues 125 to 134 (KKSLPSPSSS) the composition is skewed to low complexity. Ser142 is modified (phosphoserine). The span at 165–182 (PPVTQSKTASDKSPSTVR) shows a compositional bias: polar residues. Basic and acidic residues-rich tracts occupy residues 221–245 (PKAE…DELL) and 259–276 (TGEH…RPQD). Acidic residues predominate over residues 277–286 (SEDMWGDEDF). Positions 295–310 (VVSSEGRQSRRQSVSR) are enriched in low complexity. Residues 325–336 (SKQSPPMASSPI) are compositionally biased toward polar residues. Positions 415–424 (ASKEEKEDWL) are enriched in basic and acidic residues. The segment covering 459–469 (SGSQPLTSTQG) has biased composition (polar residues). A compositionally biased stretch (low complexity) spans 473 to 482 (AAAGGSSGTT). Coiled-coil stretches lie at residues 577 to 727 (AELQ…VDAA) and 773 to 870 (IRQR…EEQK). Lys960 is covalently cross-linked (Glycyl lysine isopeptide (Lys-Gly) (interchain with G-Cter in SUMO2)). The interval 1062 to 1085 (AASSQSALMPPAPTTRWCSQPPTG) is disordered.

As to quaternary structure, may interact with FAS cytoplasmic domain. Interacts with PARD3. Interacts with TRAPPC14. Present in various epithelial cells (at protein level).

The protein localises to the cytoplasm. Its subcellular location is the cytoskeleton. It is found in the microtubule organizing center. It localises to the centrosome. The protein resides in the centriole. The protein localises to the spindle pole. Its subcellular location is the cell junction. Its function is as follows. Keratin-binding protein required for epithelial cell polarization. Involved in apical junction complex (AJC) assembly via its interaction with PARD3. Required for ciliogenesis. The chain is Fas-binding factor 1 (FBF1) from Homo sapiens (Human).